Here is a 138-residue protein sequence, read N- to C-terminus: Large ribosomal subunit protein uL16 (138 aa).

It belongs to the universal ribosomal protein uL16 family. As to quaternary structure, part of the 50S ribosomal subunit.

Its function is as follows. Binds 23S rRNA and is also seen to make contacts with the A and possibly P site tRNAs. In Syntrophobacter fumaroxidans (strain DSM 10017 / MPOB), this protein is Large ribosomal subunit protein uL16.